Consider the following 656-residue polypeptide: Nuclear pore complex protein Nup85 (656 aa).

Methionine 1 is modified (N-acetylmethionine). Residue lysine 92 is modified to N6-acetyllysine. Phosphoserine is present on serine 223.

It belongs to the nucleoporin Nup85 family. Component of the nuclear pore complex (NPC). Component of the NPC Nup107-160 subcomplex, consisting of at least NUP107, NUP98/Nup96, NUP160, NUP133, NUP85, NUP37, NUP43 and SEC13. Interacts with NUP160, NUP133 and SEC13. Interacts with NUP37, NUP107 and NUP43. Interacts with CCR2.

It localises to the nucleus. Its subcellular location is the nuclear pore complex. The protein localises to the chromosome. The protein resides in the centromere. It is found in the kinetochore. It localises to the cytoplasm. Its subcellular location is the cytoskeleton. The protein localises to the spindle. The protein resides in the nucleus membrane. Functionally, essential component of the nuclear pore complex (NPC) that seems to be required for NPC assembly and maintenance. As part of the NPC Nup107-160 subcomplex plays a role in RNA export and in tethering NUP96/Nup98 and NUP153 to the nucleus. The Nup107-160 complex seems to be required for spindle assembly during mitosis. NUP85 is required for membrane clustering of CCL2-activated CCR2. Seems to be involved in CCR2-mediated chemotaxis of monocytes and may link activated CCR2 to the phosphatidyl-inositol 3-kinase-Rac-lammellipodium protrusion cascade. Involved in nephrogenesis. The protein is Nuclear pore complex protein Nup85 (NUP85) of Homo sapiens (Human).